Here is a 51-residue protein sequence, read N- to C-terminus: Large ribosomal subunit protein bL33 (51 aa).

The protein belongs to the bacterial ribosomal protein bL33 family.

The polypeptide is Large ribosomal subunit protein bL33 (Nitrosococcus oceani (strain ATCC 19707 / BCRC 17464 / JCM 30415 / NCIMB 11848 / C-107)).